The primary structure comprises 83 residues: Defensin-like protein 194 (83 aa).

The N-terminal stretch at 1–27 is a signal peptide; it reads MAMKSVSNFAIFLILFLVTSEISEIEA. Disulfide bonds link Cys32–Cys78, Cys44–Cys68, Cys53–Cys73, and Cys57–Cys75.

The protein belongs to the DEFL family. Protease inhibitor I18 (RTI/MTI-2) subfamily.

The protein localises to the secreted. In Arabidopsis thaliana (Mouse-ear cress), this protein is Defensin-like protein 194 (ATTI3).